We begin with the raw amino-acid sequence, 88 residues long: uncharacterized protein (88 aa).

The segment at 1 to 31 (MIPRDPRSPAPDLSAINQPAGRAERRSGPAT) is disordered.

This is an uncharacterized protein from Escherichia coli.